Reading from the N-terminus, the 448-residue chain is Deoxyguanosinetriphosphate triphosphohydrolase-like protein (448 aa).

Positions 1-26 (MQINSSWQERFLADPPREKDHRPPFR) are disordered. Positions 11–26 (FLADPPREKDHRPPFR) are enriched in basic and acidic residues. One can recognise an HD domain in the interval 59-272 (RLTHSLEVAQ…MELADDIAYA (214 aa)).

Belongs to the dGTPase family. Type 2 subfamily.

This Histophilus somni (strain 129Pt) (Haemophilus somnus) protein is Deoxyguanosinetriphosphate triphosphohydrolase-like protein.